The sequence spans 365 residues: Mitogen-activated protein kinase HOG1A (365 aa).

Positions 24 to 303 (YTDLQPVGMG…AADALAHPYL (280 aa)) constitute a Protein kinase domain. Residues 30 to 38 (VGMGAFGLL) and K53 contribute to the ATP site. D145 acts as the Proton acceptor in catalysis. T175 bears the Phosphothreonine mark. The short motif at 175-177 (TGY) is the TXY element. Y177 is subject to Phosphotyrosine.

The protein belongs to the protein kinase superfamily. Ser/Thr protein kinase family. MAP kinase subfamily. HOG1 sub-subfamily. Mg(2+) serves as cofactor. Phosphorylated. Dually phosphorylated on Thr-175 and Tyr-177, which activates the enzyme. Rapidly dephosphorylated upon either hypo- or hyperosmotic shock.

It localises to the cytoplasm. It is found in the nucleus. It catalyses the reaction L-seryl-[protein] + ATP = O-phospho-L-seryl-[protein] + ADP + H(+). The catalysed reaction is L-threonyl-[protein] + ATP = O-phospho-L-threonyl-[protein] + ADP + H(+). Its activity is regulated as follows. Activated by tyrosine and threonine phosphorylation. In terms of biological role, proline-directed serine/threonine-protein kinase involved in a signal transduction pathway that is activated by changes in the osmolarity of the extracellular environment. Controls osmotic regulation of transcription of target genes. The chain is Mitogen-activated protein kinase HOG1A (HOG1A) from Wallemia ichthyophaga (strain EXF-994 / CBS 113033).